A 150-amino-acid polypeptide reads, in one-letter code: Small ribosomal subunit protein uS15 (150 aa).

Basic residues predominate over residues 1–10 (MPHRSRHKRG). The disordered stretch occupies residues 1–21 (MPHRSRHKRGSSGSVRPATKT).

The protein belongs to the universal ribosomal protein uS15 family. As to quaternary structure, part of the 30S ribosomal subunit.

The sequence is that of Small ribosomal subunit protein uS15 from Caldivirga maquilingensis (strain ATCC 700844 / DSM 13496 / JCM 10307 / IC-167).